Here is a 309-residue protein sequence, read N- to C-terminus: 2-dehydro-3-deoxygluconokinase (309 aa).

Substrate contacts are provided by residues 28-32, Tyr88, 102-104, and Arg170; these read GDTLN and YWR. Residues 168 to 170, 228 to 233, and 261 to 264 contribute to the ATP site; these read NYR, KRGADS, and AAGD. Residue Asp264 coordinates substrate. Asp264 serves as the catalytic Proton acceptor.

It belongs to the carbohydrate kinase PfkB family.

It carries out the reaction 2-dehydro-3-deoxy-D-gluconate + ATP = 2-dehydro-3-deoxy-6-phospho-D-gluconate + ADP + H(+). Its pathway is carbohydrate acid metabolism; 2-dehydro-3-deoxy-D-gluconate degradation; D-glyceraldehyde 3-phosphate and pyruvate from 2-dehydro-3-deoxy-D-gluconate: step 1/2. In terms of biological role, catalyzes the phosphorylation of 2-keto-3-deoxygluconate (KDG) to produce 2-keto-3-deoxy-6-phosphogluconate (KDPG). In Escherichia coli (strain K12), this protein is 2-dehydro-3-deoxygluconokinase (kdgK).